The sequence spans 563 residues: NAD(P)H-quinone oxidoreductase chain 4 (563 aa).

A run of 15 helical transmembrane segments spans residues 25–45, 56–76, 90–110, 111–131, 133–153, 157–177, 189–209, 230–250, 264–284, 298–318, 335–355, 356–376, 397–417, 438–458, and 485–505; these read FPWL…VPFI, WFAL…YLYG, VSWL…ISMP, LILL…PVTF, PKLF…VFAV, LLFF…LAIW, FIIY…AMGF, GFQL…LPIV, TAPV…YALM, FAPL…LTSF, MGFV…GAML, QMIS…ATYD, FALW…SGFV, IVIA…LLSM, and VYII…PRLM.

The protein belongs to the complex I subunit 4 family.

The protein resides in the cellular thylakoid membrane. It carries out the reaction a plastoquinone + NADH + (n+1) H(+)(in) = a plastoquinol + NAD(+) + n H(+)(out). It catalyses the reaction a plastoquinone + NADPH + (n+1) H(+)(in) = a plastoquinol + NADP(+) + n H(+)(out). NDH-1 shuttles electrons from NAD(P)H, via FMN and iron-sulfur (Fe-S) centers, to quinones in the respiratory chain. The immediate electron acceptor for the enzyme in this species is believed to be plastoquinone. Couples the redox reaction to proton translocation (for every two electrons transferred, four hydrogen ions are translocated across the cytoplasmic membrane), and thus conserves the redox energy in a proton gradient. The protein is NAD(P)H-quinone oxidoreductase chain 4 of Prochlorococcus marinus (strain MIT 9303).